Consider the following 467-residue polypeptide: Cytochrome c-552 (467 aa).

An N-terminal signal peptide occupies residues 1 to 27 (MVKKLTGKSFALSALVAASFVAAGAMA). Histidine 87 is a heme c binding site. Heme contacts are provided by cysteine 115, cysteine 118, and lysine 119. Residues cysteine 153, cysteine 156, histidine 157, cysteine 195, cysteine 198, and histidine 199 each coordinate heme c. Positions 201, 202, 250, and 252 each coordinate Ca(2+). Tyrosine 202 contributes to the substrate binding site. Position 253 (histidine 253) interacts with substrate. Heme c-binding residues include histidine 264, cysteine 271, cysteine 274, histidine 275, histidine 290, cysteine 303, cysteine 306, histidine 307, and histidine 382.

The protein belongs to the cytochrome c-552 family. It depends on Ca(2+) as a cofactor. Requires heme c as cofactor.

It is found in the periplasm. The enzyme catalyses 6 Fe(III)-[cytochrome c] + NH4(+) + 2 H2O = 6 Fe(II)-[cytochrome c] + nitrite + 8 H(+). It participates in nitrogen metabolism; nitrate reduction (assimilation). Functionally, catalyzes the reduction of nitrite to ammonia, consuming six electrons in the process. This chain is Cytochrome c-552, found in Shewanella amazonensis (strain ATCC BAA-1098 / SB2B).